Consider the following 621-residue polypeptide: Very-long-chain aldehyde decarbonylase GL1-5 (621 aa).

5 consecutive transmembrane segments (helical) span residues 99 to 119, 126 to 146, 186 to 206, 224 to 244, and 332 to 352; these read IILS…GQHL, GAGL…YWFH, LLFS…IIAF, FELV…LMYT, and MWPL…SFTV. A Fatty acid hydroxylase domain is found at 138–272; sequence VEFLYYWFHR…MPFYDYIYNT (135 aa).

Belongs to the sterol desaturase family. As to quaternary structure, homodimer.

It is found in the endoplasmic reticulum membrane. The catalysed reaction is a long-chain fatty aldehyde + 2 NADPH + O2 + H(+) = a long-chain alkane + formate + 2 NADP(+) + H2O. Its function is as follows. Aldehyde decarbonylase involved in the conversion of aldehydes to alkanes. Core component of a very-long-chain alkane synthesis complex. The protein is Very-long-chain aldehyde decarbonylase GL1-5 of Oryza sativa subsp. indica (Rice).